A 358-amino-acid polypeptide reads, in one-letter code: Heat-inducible transcription repressor HrcA (358 aa).

Belongs to the HrcA family.

Its function is as follows. Negative regulator of class I heat shock genes (grpE-dnaK-dnaJ and groELS operons). Prevents heat-shock induction of these operons. In Caulobacter vibrioides (strain ATCC 19089 / CIP 103742 / CB 15) (Caulobacter crescentus), this protein is Heat-inducible transcription repressor HrcA.